The sequence spans 290 residues: Nucleoid occlusion protein (290 aa).

Positions 153–172 (EALAQRLGKGQSTIANKLRL) form a DNA-binding region, H-T-H motif.

It belongs to the ParB family.

The protein resides in the cytoplasm. Its subcellular location is the nucleoid. Functionally, effects nucleoid occlusion by binding relatively nonspecifically to DNA and preventing the assembly of the division machinery in the vicinity of the nucleoid, especially under conditions that disturb the cell cycle. It helps to coordinate cell division and chromosome segregation by preventing the formation of the Z ring through the nucleoid, which would cause chromosome breakage. The protein is Nucleoid occlusion protein of Bacillus cereus (strain ATCC 10987 / NRS 248).